Here is a 231-residue protein sequence, read N- to C-terminus: 2-C-methyl-D-erythritol 4-phosphate cytidylyltransferase (231 aa).

Belongs to the IspD/TarI cytidylyltransferase family. IspD subfamily.

The catalysed reaction is 2-C-methyl-D-erythritol 4-phosphate + CTP + H(+) = 4-CDP-2-C-methyl-D-erythritol + diphosphate. The protein operates within isoprenoid biosynthesis; isopentenyl diphosphate biosynthesis via DXP pathway; isopentenyl diphosphate from 1-deoxy-D-xylulose 5-phosphate: step 2/6. Functionally, catalyzes the formation of 4-diphosphocytidyl-2-C-methyl-D-erythritol from CTP and 2-C-methyl-D-erythritol 4-phosphate (MEP). The polypeptide is 2-C-methyl-D-erythritol 4-phosphate cytidylyltransferase (Shewanella pealeana (strain ATCC 700345 / ANG-SQ1)).